The chain runs to 467 residues: UDP-N-acetylmuramate--L-alanine ligase (467 aa).

114–120 (GTHGKTT) is a binding site for ATP.

It belongs to the MurCDEF family.

Its subcellular location is the cytoplasm. The catalysed reaction is UDP-N-acetyl-alpha-D-muramate + L-alanine + ATP = UDP-N-acetyl-alpha-D-muramoyl-L-alanine + ADP + phosphate + H(+). Its pathway is cell wall biogenesis; peptidoglycan biosynthesis. Cell wall formation. In Bradyrhizobium sp. (strain ORS 278), this protein is UDP-N-acetylmuramate--L-alanine ligase.